The primary structure comprises 1141 residues: DNA-directed RNA polymerase subunit beta (1141 aa).

Residues 1117–1141 (GINISREEPPGQLDDTPDTFSRGGM) are disordered.

Belongs to the RNA polymerase beta chain family. The RNAP catalytic core consists of 2 alpha, 1 beta, 1 beta' and 1 omega subunit. When a sigma factor is associated with the core the holoenzyme is formed, which can initiate transcription.

It catalyses the reaction RNA(n) + a ribonucleoside 5'-triphosphate = RNA(n+1) + diphosphate. Functionally, DNA-dependent RNA polymerase catalyzes the transcription of DNA into RNA using the four ribonucleoside triphosphates as substrates. This is DNA-directed RNA polymerase subunit beta from Rubrobacter xylanophilus (strain DSM 9941 / JCM 11954 / NBRC 16129 / PRD-1).